Here is a 536-residue protein sequence, read N- to C-terminus: CTP synthase (536 aa).

The tract at residues 1 to 267 (MSKFVFVTGG…CKETLKYLEL (267 aa)) is amidoligase domain. Ser-13 serves as a coordination point for CTP. Position 13 (Ser-13) interacts with UTP. Residues 14–19 (SIGKGI) and Asp-71 contribute to the ATP site. 2 residues coordinate Mg(2+): Asp-71 and Glu-141. CTP is bound by residues 148–150 (DIE), 188–193 (KTKPTQ), and Lys-224. UTP contacts are provided by residues 188-193 (KTKPTQ) and Lys-224. Residues 292-534 (KVALVGKYIE…IKASQEKLTQ (243 aa)) enclose the Glutamine amidotransferase type-1 domain. Gly-354 lines the L-glutamine pocket. The Nucleophile; for glutamine hydrolysis role is filled by Cys-381. Residues 382–385 (LGMQ), Glu-405, and Arg-462 each bind L-glutamine. Residues His-507 and Glu-509 contribute to the active site.

This sequence belongs to the CTP synthase family. As to quaternary structure, homotetramer.

The enzyme catalyses UTP + L-glutamine + ATP + H2O = CTP + L-glutamate + ADP + phosphate + 2 H(+). It catalyses the reaction L-glutamine + H2O = L-glutamate + NH4(+). The catalysed reaction is UTP + NH4(+) + ATP = CTP + ADP + phosphate + 2 H(+). It participates in pyrimidine metabolism; CTP biosynthesis via de novo pathway; CTP from UDP: step 2/2. Allosterically activated by GTP, when glutamine is the substrate; GTP has no effect on the reaction when ammonia is the substrate. The allosteric effector GTP functions by stabilizing the protein conformation that binds the tetrahedral intermediate(s) formed during glutamine hydrolysis. Inhibited by the product CTP, via allosteric rather than competitive inhibition. In terms of biological role, catalyzes the ATP-dependent amination of UTP to CTP with either L-glutamine or ammonia as the source of nitrogen. Regulates intracellular CTP levels through interactions with the four ribonucleotide triphosphates. The protein is CTP synthase of Prochlorococcus marinus (strain MIT 9215).